We begin with the raw amino-acid sequence, 873 residues long: Bifunctional heparan sulfate N-deacetylase/N-sulfotransferase 3 (873 aa).

Topologically, residues 1 to 13 (MSFIMKLHRHFQR) are cytoplasmic. Residues 14–34 (TVILLATFCMVSIIISAYYLY) form a helical; Signal-anchor for type II membrane protein membrane-spanning segment. At 35–873 (SGYKQENELS…WLRQELQKVR (839 aa)) the chain is on the lumenal side. Positions 36–589 (GYKQENELSE…KRHRDIWSKE (554 aa)) are heparan sulfate N-deacetylase 3. N146, N226, N342, and N392 each carry an N-linked (GlcNAc...) asparagine glycan. A heparan sulfate N-sulfotransferase 3 region spans residues 590–873 (KTCDRLPKFL…WLRQELQKVR (284 aa)). The active-site For sulfotransferase activity is K605. 605–609 (KTGTT) is a 3'-phosphoadenylyl sulfate binding site. An N-linked (GlcNAc...) asparagine glycan is attached at N658. S703 provides a ligand contact to 3'-phosphoadenylyl sulfate. N794 is a glycosylation site (N-linked (GlcNAc...) asparagine). A disulfide bridge connects residues C809 and C819. Residue 824-828 (KGRKY) coordinates 3'-phosphoadenylyl sulfate.

Belongs to the sulfotransferase 1 family. NDST subfamily. As to quaternary structure, monomer. As to expression, expressed in brain, kidney, liver, fetal and adult lung, adult pancreas, placenta, fetal spleen and fetal thymus. Not detected in adult/ fetal heart and skeletal muscle.

It is found in the golgi apparatus membrane. It carries out the reaction alpha-D-glucosaminyl-[heparan sulfate](n) + 3'-phosphoadenylyl sulfate = N-sulfo-alpha-D-glucosaminyl-[heparan sulfate](n) + adenosine 3',5'-bisphosphate + 2 H(+). Its pathway is glycan metabolism; heparan sulfate biosynthesis. It participates in glycan metabolism; heparin biosynthesis. Essential bifunctional enzyme that catalyzes both the N-deacetylation and the N-sulfation of glucosamine (GlcNAc) of the glycosaminoglycan in heparan sulfate. Modifies the GlcNAc-GlcA disaccharide repeating sugar backbone to make N-sulfated heparosan, a prerequisite substrate for later modifications in heparin biosynthesis. Has high deacetylase activity but low sulfotransferase activity. The polypeptide is Bifunctional heparan sulfate N-deacetylase/N-sulfotransferase 3 (Homo sapiens (Human)).